Here is a 685-residue protein sequence, read N- to C-terminus: Invasion protein InvA (685 aa).

8 consecutive transmembrane segments (helical) span residues 17–37 (ILVL…TYLV), 39–59 (FLIA…FYID), 61–81 (ILSF…RLAL), 110–130 (SLAV…IVIT), 197–217 (AIAG…VGMT), 235–255 (IGDG…AGFI), 274–294 (LLNN…MGTL), and 295–315 (PGFP…LFYF).

The protein belongs to the FHIPEP (flagella/HR/invasion proteins export pore) family.

The protein localises to the cell inner membrane. Its function is as follows. Involved in the invasion of the cells of the intestinal epithelium. Could be involved in the translocation of the InvE protein. This chain is Invasion protein InvA (invA), found in Salmonella typhi.